Here is a 1331-residue protein sequence, read N- to C-terminus: Lysine-specific demethylase 3A-A (1331 aa).

Disordered regions lie at residues 243–280 (LNDK…PSKD), 358–381 (TPPQ…TQNL), and 497–532 (KVVK…VTYP). The segment covering 266–280 (TELKQTRNEEVPSKD) has biased composition (basic and acidic residues). A C6-type zinc finger spans residues 683–708 (CDACDTTIFNLHWVCPKCGFGVCVDC). The LXXLL motif motif lies at 894 to 898 (LRNLL). Residues 1086 to 1291 (RREGKLNLAA…HCFWLTQEFR (206 aa)) form the JmjC domain. Fe cation contacts are provided by H1130, D1132, and H1259.

Belongs to the JHDM2 histone demethylase family. Fe(2+) serves as cofactor.

Its subcellular location is the cytoplasm. It is found in the nucleus. It catalyses the reaction N(6),N(6)-dimethyl-L-lysyl(9)-[histone H3] + 2 2-oxoglutarate + 2 O2 = L-lysyl(9)-[histone H3] + 2 formaldehyde + 2 succinate + 2 CO2. In terms of biological role, histone demethylase that specifically demethylates 'Lys-9' of histone H3, thereby playing a central role in histone code. Preferentially demethylates mono- and dimethylated H3 'Lys-9' residue, with a preference for dimethylated residue, while it has weak or no activity on trimethylated H3 'Lys-9'. Demethylation of Lys residue generates formaldehyde and succinate. The sequence is that of Lysine-specific demethylase 3A-A (kdm3a-a) from Xenopus laevis (African clawed frog).